Here is a 371-residue protein sequence, read N- to C-terminus: Queuine tRNA-ribosyltransferase (371 aa).

Asp89 (proton acceptor) is an active-site residue. Substrate contacts are provided by residues 89 to 93, Asp143, Gln185, and Gly212; that span reads DSGGF. The interval 243 to 249 is RNA binding; sequence GVGKPED. The active-site Nucleophile is the Asp262. Positions 267–271 are RNA binding; important for wobble base 34 recognition; that stretch reads TRNAR. The Zn(2+) site is built by Cys300, Cys302, Cys305, and His331.

The protein belongs to the queuine tRNA-ribosyltransferase family. As to quaternary structure, homodimer. Within each dimer, one monomer is responsible for RNA recognition and catalysis, while the other monomer binds to the replacement base PreQ1. Requires Zn(2+) as cofactor.

The catalysed reaction is 7-aminomethyl-7-carbaguanine + guanosine(34) in tRNA = 7-aminomethyl-7-carbaguanosine(34) in tRNA + guanine. The protein operates within tRNA modification; tRNA-queuosine biosynthesis. Its function is as follows. Catalyzes the base-exchange of a guanine (G) residue with the queuine precursor 7-aminomethyl-7-deazaguanine (PreQ1) at position 34 (anticodon wobble position) in tRNAs with GU(N) anticodons (tRNA-Asp, -Asn, -His and -Tyr). Catalysis occurs through a double-displacement mechanism. The nucleophile active site attacks the C1' of nucleotide 34 to detach the guanine base from the RNA, forming a covalent enzyme-RNA intermediate. The proton acceptor active site deprotonates the incoming PreQ1, allowing a nucleophilic attack on the C1' of the ribose to form the product. After dissociation, two additional enzymatic reactions on the tRNA convert PreQ1 to queuine (Q), resulting in the hypermodified nucleoside queuosine (7-(((4,5-cis-dihydroxy-2-cyclopenten-1-yl)amino)methyl)-7-deazaguanosine). The polypeptide is Queuine tRNA-ribosyltransferase (Thioalkalivibrio sulfidiphilus (strain HL-EbGR7)).